A 969-amino-acid polypeptide reads, in one-letter code: Activity-dependent neuroprotective protein a (969 aa).

The C2H2-type 1 zinc finger occupies 74–97 (FCCSDCPFASKYFSAYKNHFRNVH). The C2H2-type 2; atypical zinc finger occupies 107 to 129 (LNCSYCTYSGNKRTLETHVRLFH). C2H2-type zinc fingers lie at residues 169–192 (YYCK…YREH) and 221–244 (IHCK…IEFH). The C2H2-type 5; atypical zinc-finger motif lies at 401–423 (KICTICNELFPESAYSAHFEKEH). The C2H2-type 6; atypical zinc finger occupies 443-464 (SKCLYCNRYLPSDSLLNHMLVH). A C2H2-type 7 zinc finger spans residues 466-489 (LSCPHCHSTFHEVEKIVAHNRLAH). The segment at 583–608 (TLCPLCFTILKGPISDALAHHLRDSH) adopts a C2H2-type 8; atypical zinc-finger fold. The segment at 623-647 (YKCIHCLGVYTSNMTASTITLHLVH) adopts a C2H2-type 9; atypical zinc-finger fold. The disordered stretch occupies residues 659–689 (KPITTGLRSPGAGSLKRELVTPDPSDPKRRK). Residues 732 to 774 (AYFNRHPYPSQREVEKLAASLWLWKSDVASHFGNHRRLCDRDF) constitute a DNA-binding region (homeobox). Residues 911-949 (DVRANRSSPRVGPKVLDGSVSSSSPDEATWSGNMSSEES) are disordered. A compositionally biased stretch (polar residues) spans 929–946 (SVSSSSPDEATWSGNMSS).

Interacts with catenin beta-1/ctnnb1.

The protein resides in the nucleus. Functionally, may be involved in transcriptional regulation. Positively modulates wnt-beta-catenin/ctnnb1 signaling. Required for embryonic neurogenesis. Required for progression through late erythroid differentiation. The protein is Activity-dependent neuroprotective protein a of Danio rerio (Zebrafish).